The primary structure comprises 651 residues: Acetyl-coenzyme A synthetase (651 aa).

CoA is bound by residues 191–194 (RGGK), threonine 311, and asparagine 335. ATP contacts are provided by residues 387–389 (GEP), 411–416 (DTWWQT), aspartate 500, and arginine 515. Serine 523 is a binding site for CoA. Arginine 526 provides a ligand contact to ATP. 3 residues coordinate Mg(2+): valine 537, histidine 539, and valine 542. Arginine 584 is a binding site for CoA. Lysine 609 is subject to N6-acetyllysine.

This sequence belongs to the ATP-dependent AMP-binding enzyme family. Requires Mg(2+) as cofactor. Post-translationally, acetylated. Deacetylation by the SIR2-homolog deacetylase activates the enzyme.

It carries out the reaction acetate + ATP + CoA = acetyl-CoA + AMP + diphosphate. In terms of biological role, catalyzes the conversion of acetate into acetyl-CoA (AcCoA), an essential intermediate at the junction of anabolic and catabolic pathways. AcsA undergoes a two-step reaction. In the first half reaction, AcsA combines acetate with ATP to form acetyl-adenylate (AcAMP) intermediate. In the second half reaction, it can then transfer the acetyl group from AcAMP to the sulfhydryl group of CoA, forming the product AcCoA. This chain is Acetyl-coenzyme A synthetase, found in Pseudomonas savastanoi pv. phaseolicola (strain 1448A / Race 6) (Pseudomonas syringae pv. phaseolicola (strain 1448A / Race 6)).